A 443-amino-acid chain; its full sequence is Thymidine phosphorylase (443 aa).

Belongs to the thymidine/pyrimidine-nucleoside phosphorylase family. As to quaternary structure, homodimer.

The catalysed reaction is thymidine + phosphate = 2-deoxy-alpha-D-ribose 1-phosphate + thymine. Its pathway is pyrimidine metabolism; dTMP biosynthesis via salvage pathway; dTMP from thymine: step 1/2. In terms of biological role, the enzymes which catalyze the reversible phosphorolysis of pyrimidine nucleosides are involved in the degradation of these compounds and in their utilization as carbon and energy sources, or in the rescue of pyrimidine bases for nucleotide synthesis. The chain is Thymidine phosphorylase from Shewanella sp. (strain ANA-3).